Reading from the N-terminus, the 64-residue chain is Long neurotoxin MS5 (64 aa).

5 disulfide bridges follow: Cys3/Cys24, Cys6/Cys11, Cys17/Cys41, Cys45/Cys57, and Cys58/Cys63.

Belongs to the three-finger toxin family. Ancestral subfamily. In terms of tissue distribution, expressed by the venom gland.

It localises to the secreted. In terms of biological role, produces peripheral paralysis by blocking neuromuscular transmission at the postsynaptic site. Very weak inhibitor of the endogenous nicotinic acetylcholine receptors (nAChR) in the human rhabdomyosarcoma TE 671 cell line. This neurotoxin is lethal to zebrafish by injection at the back of the dorsolateral region, but is not toxic to mice by intraperitoneal injection. In Micrurus surinamensis (Surinam coral snake), this protein is Long neurotoxin MS5.